A 221-amino-acid polypeptide reads, in one-letter code: Large ribosomal subunit protein uL4 (221 aa).

Residues 45 to 100 (ARQGTHKTKNRGEVSGAGRKPFKQKGTGRARQGSIRAPQMTGGGIVHGPTPRDYSQ) are disordered.

It belongs to the universal ribosomal protein uL4 family. In terms of assembly, part of the 50S ribosomal subunit.

Its function is as follows. One of the primary rRNA binding proteins, this protein initially binds near the 5'-end of the 23S rRNA. It is important during the early stages of 50S assembly. It makes multiple contacts with different domains of the 23S rRNA in the assembled 50S subunit and ribosome. In terms of biological role, forms part of the polypeptide exit tunnel. This is Large ribosomal subunit protein uL4 from Leifsonia xyli subsp. xyli (strain CTCB07).